A 485-amino-acid polypeptide reads, in one-letter code: Glutamyl-tRNA(Gln) amidotransferase subunit A (485 aa).

Residues Lys-79 and Ser-154 each act as charge relay system in the active site. Catalysis depends on Ser-178, which acts as the Acyl-ester intermediate.

This sequence belongs to the amidase family. GatA subfamily. In terms of assembly, heterotrimer of A, B and C subunits.

It catalyses the reaction L-glutamyl-tRNA(Gln) + L-glutamine + ATP + H2O = L-glutaminyl-tRNA(Gln) + L-glutamate + ADP + phosphate + H(+). Functionally, allows the formation of correctly charged Gln-tRNA(Gln) through the transamidation of misacylated Glu-tRNA(Gln) in organisms which lack glutaminyl-tRNA synthetase. The reaction takes place in the presence of glutamine and ATP through an activated gamma-phospho-Glu-tRNA(Gln). The polypeptide is Glutamyl-tRNA(Gln) amidotransferase subunit A (Geobacillus thermodenitrificans (strain NG80-2)).